An 86-amino-acid chain; its full sequence is RNA-binding protein Hfq (86 aa).

The region spanning 9 to 68 (DPYLNTLRKEKVGVSIYLVNGIKLQGTIESFDQFVILLKNTVSQMVYKHAISTVVPVRPI) is the Sm domain.

This sequence belongs to the Hfq family. As to quaternary structure, homohexamer.

Functionally, RNA chaperone that binds small regulatory RNA (sRNAs) and mRNAs to facilitate mRNA translational regulation in response to envelope stress, environmental stress and changes in metabolite concentrations. Also binds with high specificity to tRNAs. The protein is RNA-binding protein Hfq of Pseudomonas savastanoi pv. phaseolicola (strain 1448A / Race 6) (Pseudomonas syringae pv. phaseolicola (strain 1448A / Race 6)).